A 332-amino-acid chain; its full sequence is Formamidase (332 aa).

The 246-residue stretch at 14-259 (FLTALIQYPV…WEIVTAEVYP (246 aa)) folds into the CN hydrolase domain. E60 (proton acceptor) is an active-site residue. Residue K132 is the Proton donor of the active site. The active-site Nucleophile is the C165.

This sequence belongs to the carbon-nitrogen hydrolase superfamily. Aliphatic amidase family.

It carries out the reaction formamide + H2O = formate + NH4(+). Functionally, is an aliphatic amidase with a restricted substrate specificity, as it only hydrolyzes formamide. In Bacillus thuringiensis (strain Al Hakam), this protein is Formamidase.